The primary structure comprises 924 residues: MLRPQLNPSSHTTTTSSSSSTQLFASSSCIASLRRPSSSSSSVVAAARRTRGQGSSRVVVVCASSSATASRGDSSSDMAAAAAVRVKAVATIKVTVGELINRSIDIRDLIGRSLSLELVSSELDAKTGKEKATVRSYAHNVDDDDHSVVTYEADFDVPSGFGPIGAIIVTNELRQEMFLEDINLTASDGAGNSTVLPIRCNSWVQPKSVGDEGTPSKRIFFANKTYLPGQTPAGLRSYRKNDLQQKRGDGTGEREADDRVYDYDVYNDLGNPDSNGDLARPVLGGNKQFPYPRRCRTGRPPSKKDPKSETRKGNVYVPRDEEFSPEKEDYFLRKTVGSVLQAAVPAAQSLLLDKLKWNLPFPSFFVIDKLFEDGVELPGVDKLNFLESVVPRLLEHLRDTPAEKILRFETPANIQKDKFAWLRDEEFARETLAGINPYAIELVREFPLKSKLDPAVYGPAESAITADLLEEQMRRVMTVEEAISQKRLFMLDFHDLFLPYVHKIRSLDHTTMYGSRTVFFLTDDGTLQLLAIELTRPASPSQPQWRQVFTPSTDATMSWLWRMAKAHVRAHDAGHHELITHWLRTHCAVEPYIIAANRQLSEMHPIYQLLRPHFRYTMRINARARSALISAGGIIERSFSPQKYSMELSSVAYDKLWRFDTEALPADLVRRGMAEEDPTAEHGLKLAIEDYPFANDGLLIWDAIKTWVQAYVARFYPDADSVAGDEELQAFWTEVRTKGHGDKKDAPWWPKLDSPESLAHTLTTIVWVAAAHHAAVNFGQYDFGGYFPNRPSIARTVMPVEEPVDGAAMERFLDNPDQALRECFPSQVQATVVMAVLDVLSSHSTDEEYLGGEQTRPWNSDAAVQAAYDGFAARLKEIEGVIDGRNKDRKLKNRCGAGILPYQLMKPFSDSGVTGMGIPNSTSI.

A chloroplast-targeting transit peptide spans 1-61 (MLRPQLNPSS…GQGSSRVVVV (61 aa)). In terms of domain architecture, PLAT spans 88 to 218 (AVATIKVTVG…VGDEGTPSKR (131 aa)). A Lipoxygenase domain is found at 225-924 (TYLPGQTPAG…GMGIPNSTSI (700 aa)). Residues 231 to 315 (TPAGLRSYRK…PKSETRKGNV (85 aa)) form a disordered region. Composition is skewed to basic and acidic residues over residues 239 to 262 (RKNDLQQKRGDGTGEREADDRVYD) and 302 to 315 (SKKDPKSETRKGNV). Positions 581, 586, 773, 777, and 924 each coordinate Fe cation.

It belongs to the lipoxygenase family. Requires Fe cation as cofactor.

It is found in the plastid. It localises to the chloroplast. It carries out the reaction (9Z,12Z)-octadecadienoate + O2 = (13S)-hydroperoxy-(9Z,11E)-octadecadienoate. The catalysed reaction is (9Z,12Z,15Z)-octadecatrienoate + O2 = (13S)-hydroperoxy-(9Z,11E,15Z)-octadecatrienoate. It functions in the pathway lipid metabolism; oxylipin biosynthesis. Its function is as follows. Plant lipoxygenase may be involved in a number of diverse aspects of plant physiology including growth and development, pest resistance, and senescence or responses to wounding. This lipoxygenase introduces molecular oxygen exclusively into the C-13 position of linoleic and linolenic acids. In Oryza sativa subsp. japonica (Rice), this protein is Lipoxygenase 7, chloroplastic (CM-LOX1).